Consider the following 199-residue polypeptide: Large ribosomal subunit protein bL25 (199 aa).

It belongs to the bacterial ribosomal protein bL25 family. CTC subfamily. As to quaternary structure, part of the 50S ribosomal subunit; part of the 5S rRNA/L5/L18/L25 subcomplex. Contacts the 5S rRNA. Binds to the 5S rRNA independently of L5 and L18.

Functionally, this is one of the proteins that binds to the 5S RNA in the ribosome where it forms part of the central protuberance. This is Large ribosomal subunit protein bL25 from Pelodictyon phaeoclathratiforme (strain DSM 5477 / BU-1).